The following is an 890-amino-acid chain: MDKGINLQNDKEPSPMAEGNPADFSAHTPMMQQYLALKAGYPDTLVFYRMGDFYELFWADAEKAARLLDITLTQRGQSAGQPVVMAGVPFHALENYLGRLIRMGESVAICEQVGEVGAAKGPVERKVVRVVTPGTLTDSELLPDKAESMLLAVHQAPRARCGLAWLSVTQGVVHLAECTHDEVGTWIARIGPSEVIYSAGVTERFEQQLQALRQGGVLSCPLSLRPDWQFDGALGARKLLEQLGAASLNAWDAQDLAHAHAASAALLSYAEHTQGRALTHIHAVRVQKNDELIALPPATRRNLELTRTLRGEDAPTLFSLLDTCMTGMGSRLLKTWLLEPRRDRTEARARLAATAELRGDHGGTGSWQALRAALRGVSDVERITARIALRQVRPRELVALCKTLHKAEQIAAEHRWQDPLLAGISGDLHAPPACGALLAGAILEEPSALVRDGGVIADGFDAELDELRGIQNHCDDFLLALETREKARTLIPNLRVQFNKVHGFYIEVTSSYLDRIPDDYRRRQTLKNAERFITPELKAFEDKALSAQERALAREKWLYEQVLDQLQQHVPALTRAAQAIAALDALCALAERSLTLGWCAPQFAAEPCIEIEGGRHPVVEARLAETSAGAFIPNHTRLNANTRMQIITGPNMGGKSTYMRQVALIVLLASMGSHVPAAHCRLGPIDAIHTRIGAADDLANAQSTFMMEMTEAAQILHAATPHSLVLMDEIGRGTSTFDGLALASGIATHLHDRTRAFTLFATHYFELTELAARHAHAVNVHVGATESGSDIVFLHEIQPGPASRSYGIHVARLAGVPAPVLNHARHALSALEERANEGETQVDLFAPPPESEAPGISPVEAALQGIHPDSLSPREALDALYQLKRLAQPG.

Residues 1–13 (MDKGINLQNDKEP) show a composition bias toward basic and acidic residues. The tract at residues 1–23 (MDKGINLQNDKEPSPMAEGNPAD) is disordered. Residue 649-656 (GPNMGGKS) coordinates ATP.

It belongs to the DNA mismatch repair MutS family.

Functionally, this protein is involved in the repair of mismatches in DNA. It is possible that it carries out the mismatch recognition step. This protein has a weak ATPase activity. This Paracidovorax citrulli (strain AAC00-1) (Acidovorax citrulli) protein is DNA mismatch repair protein MutS.